A 141-amino-acid chain; its full sequence is Putative inactive deoxyuridine 5'-triphosphate nucleotidohydrolase-like protein FLJ16323 (141 aa).

Belongs to the dUTPase family.

The sequence is that of Putative inactive deoxyuridine 5'-triphosphate nucleotidohydrolase-like protein FLJ16323 from Homo sapiens (Human).